Reading from the N-terminus, the 781-residue chain is Molybdenum cofactor sulfurase (781 aa).

Position 246 is an N6-(pyridoxal phosphate)lysine (K246). Residue C413 is part of the active site. The 163-residue stretch at 619-781 (GDAVAQWLSE…MTCGDVVIVE (163 aa)) folds into the MOSC domain. S734 is subject to Phosphoserine.

The protein belongs to the class-V pyridoxal-phosphate-dependent aminotransferase family. MOCOS subfamily. Pyridoxal 5'-phosphate serves as cofactor.

The enzyme catalyses Mo-molybdopterin + L-cysteine + AH2 = thio-Mo-molybdopterin + L-alanine + A + H2O. Its pathway is cofactor biosynthesis; molybdopterin biosynthesis. In terms of biological role, sulfurates the molybdenum cofactor. Sulfation of molybdenum is essential for xanthine dehydrogenase (XDH) and aldehyde oxidase (ADO) enzymes in which molybdenum cofactor is liganded by 1 oxygen and 1 sulfur atom in active form. This is Molybdenum cofactor sulfurase from Drosophila erecta (Fruit fly).